The chain runs to 1007 residues: Serine/threonine-protein kinase PRP4 homolog (1007 aa).

The span at 1-10 (MAAAETQSLR) shows a compositional bias: polar residues. Residues 1-99 (MAAAETQSLR…EGMSPAKRTK (99 aa)) are disordered. At A2 the chain carries N-acetylalanine. S8, S20, S23, and S32 each carry phosphoserine. Composition is skewed to basic residues over residues 39-59 (KHSRHKKKKHKHRSKHKKHKH) and 67-81 (KKHKHKHKHKKHKRK). A compositionally biased stretch (basic and acidic residues) spans 82 to 91 (EIIDASDKEG). Residues S87 and S93 each carry the phosphoserine modification. An N6-acetyllysine; alternate modification is found at K99. K99 is covalently cross-linked (Glycyl lysine isopeptide (Lys-Gly) (interchain with G-Cter in SUMO2); alternate). A Glycyl lysine isopeptide (Lys-Gly) (interchain with G-Cter in SUMO2) cross-link involves residue K111. K117 participates in a covalent cross-link: Glycyl lysine isopeptide (Lys-Gly) (interchain with G-Cter in SUMO2); alternate. K117 is covalently cross-linked (Glycyl lysine isopeptide (Lys-Gly) (interchain with G-Cter in SUMO1); alternate). S131 is subject to Phosphoserine. Residue Y140 is modified to Phosphotyrosine. Disordered regions lie at residues 140–533 (YESG…EEED) and 559–583 (SNMSVPSEPSSPQSSTRTRSPSPDD). S142, S144, and S166 each carry phosphoserine. Positions 157-168 (GNRSSTRSSSTK) are enriched in low complexity. Glycyl lysine isopeptide (Lys-Gly) (interchain with G-Cter in SUMO2) cross-links involve residues K170 and K177. Composition is skewed to basic residues over residues 179–202 (TTKKRSKSRSKERTRHRSDKKKSK) and 214–230 (RSKSKERKKSKSPSKRS). S239, S241, S257, S277, S283, S292, and S294 each carry phosphoserine. Positions 247–270 (RSQEKIGKARSPTDDKVKIEDKSK) are enriched in basic and acidic residues. Residues 302-315 (SKDRRSRSKERKSK) show a composition bias toward basic residues. A compositionally biased stretch (basic and acidic residues) spans 316–325 (RSETDKEKKP). 5 positions are modified to phosphoserine: S328, S354, S356, S366, and S368. Basic residues predominate over residues 342 to 367 (PSRRPGRSPKRRSLSPKPRDKSRRSR). T385 is modified (phosphothreonine). Residue S387 is modified to Phosphoserine. Basic and acidic residues-rich tracts occupy residues 395-408 (RSLERKRREPERRR) and 415-429 (RPRDDILSRRERSKD). A phosphoserine mark is found at S427, S431, and S437. Residues 438-497 (PTRRRSRSPIRRRSRSPLRRSRSPRRRSRSPRRRDRGRRSRSRLRRRSRSRGGRRRRSRS) are compositionally biased toward basic residues. S518, S519, S520, S565, S569, S578, and S580 each carry phosphoserine. Over residues 518-533 (SSSDDNLEDFDVEEED) the composition is skewed to acidic residues. The segment covering 562-581 (SVPSEPSSPQSSTRTRSPSP) has biased composition (low complexity). Residues K593 and K659 each participate in a glycyl lysine isopeptide (Lys-Gly) (interchain with G-Cter in SUMO2) cross-link. In terms of domain architecture, Protein kinase spans 687 to 1006 (YNVYGYTGQG…ALQHAFIQEK (320 aa)). ATP is bound by residues 693-701 (TGQGVFSNV) and K717. Position 717 is an N6-acetyllysine (K717). The active-site Proton acceptor is D815. Y849 is subject to Phosphotyrosine. The residue at position 852 (S852) is a Phosphoserine.

This sequence belongs to the protein kinase superfamily. CMGC Ser/Thr protein kinase family. As to quaternary structure, interacts with CLK1 C-terminus. Associates with the U5 snRNP and NCOR1 deacetylase complexes. Identified in the spliceosome C complex. In terms of processing, phosphorylated by CLK1. Autophosphorylated; phosphorylation inhibits interaction with its targets, such as PRPF6 or SMARCA4. As to expression, ubiquitous.

It is found in the nucleus. Its subcellular location is the chromosome. The protein resides in the centromere. The protein localises to the kinetochore. It carries out the reaction L-seryl-[protein] + ATP = O-phospho-L-seryl-[protein] + ADP + H(+). It catalyses the reaction L-threonyl-[protein] + ATP = O-phospho-L-threonyl-[protein] + ADP + H(+). In terms of biological role, serine/threonine kinase involved in spliceosomal assembly as well as mitosis and signaling regulation. Connects chromatin mediated regulation of transcription and pre-mRNA splicing. During spliceosomal assembly, interacts with and phosphorylates PRPF6 and PRPF31, components of the U4/U6-U5 tri-small nuclear ribonucleoprotein (snRNP), to facilitate the formation of the spliceosome B complex. Plays a role in regulating transcription and the spindle assembly checkpoint (SAC). Associates with U5 snRNP and NCOR1 deacetylase complexes which may allow a coordination of pre-mRNA splicing with chromatin remodeling events involved in transcriptional regulation. Associates and probably phosphorylates SMARCA4 and NCOR1. Phosphorylates SRSF1. Associates with kinetochores during mitosis and is necessary for recruitment and maintenance of the checkpoint proteins such as MAD1L1 and MAD12L1 at the kinetochores. Phosphorylates and regulates the activity of the transcription factors such as ELK1 and KLF13. Phosphorylates nuclear YAP1 and WWTR1/TAZ which induces nuclear exclusion and regulates Hippo signaling pathway, involved in tissue growth control. In Homo sapiens (Human), this protein is Serine/threonine-protein kinase PRP4 homolog.